The chain runs to 108 residues: Insulin (108 aa).

The first 21 residues, 1–21 (MAVWLQAGALLVLLVVSSVST), serve as a signal peptide directing secretion. Intrachain disulfides connect cysteine 30–cysteine 94, cysteine 42–cysteine 107, and cysteine 93–cysteine 98. Residues 54-84 (DVEPLLGFLPPKSAQETEVADFAFKDHAELI) constitute a propeptide, c peptide.

The protein belongs to the insulin family. As to quaternary structure, heterodimer of a B chain and an A chain linked by two disulfide bonds.

Its subcellular location is the secreted. Its function is as follows. Insulin decreases blood glucose concentration. It increases cell permeability to monosaccharides, amino acids and fatty acids. It accelerates glycolysis, the pentose phosphate cycle, and glycogen synthesis in liver. The sequence is that of Insulin (ins) from Danio rerio (Zebrafish).